A 414-amino-acid chain; its full sequence is Serine hydroxymethyltransferase (414 aa).

Residues Leu-117 and 121–123 each bind (6S)-5,6,7,8-tetrahydrofolate; that span reads GHL. Lys-226 carries the post-translational modification N6-(pyridoxal phosphate)lysine.

The protein belongs to the SHMT family. Homodimer. Pyridoxal 5'-phosphate is required as a cofactor.

It localises to the cytoplasm. It catalyses the reaction (6R)-5,10-methylene-5,6,7,8-tetrahydrofolate + glycine + H2O = (6S)-5,6,7,8-tetrahydrofolate + L-serine. It functions in the pathway one-carbon metabolism; tetrahydrofolate interconversion. It participates in amino-acid biosynthesis; glycine biosynthesis; glycine from L-serine: step 1/1. Functionally, catalyzes the reversible interconversion of serine and glycine with tetrahydrofolate (THF) serving as the one-carbon carrier. This reaction serves as the major source of one-carbon groups required for the biosynthesis of purines, thymidylate, methionine, and other important biomolecules. Also exhibits THF-independent aldolase activity toward beta-hydroxyamino acids, producing glycine and aldehydes, via a retro-aldol mechanism. This chain is Serine hydroxymethyltransferase, found in Dictyoglomus turgidum (strain DSM 6724 / Z-1310).